The primary structure comprises 346 residues: Methylthioribose-1-phosphate isomerase (346 aa).

Substrate contacts are provided by residues Arg46–Ala48, Arg89, and Gln196. Asp237 (proton donor) is an active-site residue. A substrate-binding site is contributed by Asn247–Lys248.

It belongs to the eIF-2B alpha/beta/delta subunits family. MtnA subfamily.

It catalyses the reaction 5-(methylsulfanyl)-alpha-D-ribose 1-phosphate = 5-(methylsulfanyl)-D-ribulose 1-phosphate. The protein operates within amino-acid biosynthesis; L-methionine biosynthesis via salvage pathway; L-methionine from S-methyl-5-thio-alpha-D-ribose 1-phosphate: step 1/6. In terms of biological role, catalyzes the interconversion of methylthioribose-1-phosphate (MTR-1-P) into methylthioribulose-1-phosphate (MTRu-1-P). The polypeptide is Methylthioribose-1-phosphate isomerase (Geobacter sulfurreducens (strain ATCC 51573 / DSM 12127 / PCA)).